The chain runs to 61 residues: Short neurotoxin 1 (61 aa).

Disulfide bonds link cysteine 3/cysteine 23, cysteine 17/cysteine 40, cysteine 42/cysteine 53, and cysteine 54/cysteine 59.

This sequence belongs to the three-finger toxin family. Short-chain subfamily. Type I alpha-neurotoxin sub-subfamily. Expressed by the venom gland.

The protein localises to the secreted. In terms of biological role, binds to muscle nicotinic acetylcholine receptor (nAChR) and inhibit acetylcholine from binding to the receptor, thereby impairing neuromuscular transmission. This is Short neurotoxin 1 from Naja philippinensis (Philippine cobra).